A 149-amino-acid chain; its full sequence is uncharacterized protein (149 aa).

The region spanning Met1–Lys149 is the N-acetyltransferase domain.

It belongs to the acetyltransferase family.

This is an uncharacterized protein from Bacillus subtilis (strain 168).